Here is a 707-residue protein sequence, read N- to C-terminus: Leukotoxin export ATP-binding protein LtxB (707 aa).

One can recognise a Peptidase C39 domain in the interval 4-125; sequence QKNTNLALQA…ERYQSKVILI (122 aa). H83 is an active-site residue. A run of 5 helical transmembrane segments spans residues 158-178, 191-211, 269-289, 295-315, and 387-407; these read LIVSIFLQIFALITPLFFQVV, LNVITVALAIVVLFEIILGGL, ALTSILDLLFSFIFFAVMWYY, LVVLGSLPCYVIWSVFISPIL, and AVMVINLWLGAHLVISGDLSI. The 279-residue stretch at 158 to 436 folds into the ABC transmembrane type-1 domain; that stretch reads LIVSIFLQIF…LAQIWQDFQQ (279 aa). The ABC transporter domain maps to 468–703; that stretch reads ISFRNIKFRY…EKGLYSYLHQ (236 aa). 502–509 lines the ATP pocket; sequence GRSGSGKS.

Belongs to the ABC transporter superfamily. Protein-1 exporter (TC 3.A.1.109) family. As to quaternary structure, probably part of a complex composed of LtxB, LtxD and TdeA, which forms a single transport channel across the two membranes.

It is found in the cell inner membrane. It catalyses the reaction ATP + H2O + proteinSide 1 = ADP + phosphate + proteinSide 2.. In terms of biological role, involved in the export of the LtxA leukotoxin. This chain is Leukotoxin export ATP-binding protein LtxB, found in Aggregatibacter actinomycetemcomitans (Actinobacillus actinomycetemcomitans).